The primary structure comprises 274 residues: Bis(5'-nucleosyl)-tetraphosphatase, symmetrical (274 aa).

This sequence belongs to the Ap4A hydrolase family.

It catalyses the reaction P(1),P(4)-bis(5'-adenosyl) tetraphosphate + H2O = 2 ADP + 2 H(+). Its function is as follows. Hydrolyzes diadenosine 5',5'''-P1,P4-tetraphosphate to yield ADP. This is Bis(5'-nucleosyl)-tetraphosphatase, symmetrical from Shewanella baltica (strain OS195).